The sequence spans 72 residues: UPF0352 protein Shal_2512 (72 aa).

It belongs to the UPF0352 family.

The sequence is that of UPF0352 protein Shal_2512 from Shewanella halifaxensis (strain HAW-EB4).